The sequence spans 105 residues: Urease subunit beta (105 aa).

This sequence belongs to the urease beta subunit family. In terms of assembly, heterotrimer of UreA (gamma), UreB (beta) and UreC (alpha) subunits. Three heterotrimers associate to form the active enzyme.

The protein localises to the cytoplasm. It catalyses the reaction urea + 2 H2O + H(+) = hydrogencarbonate + 2 NH4(+). The protein operates within nitrogen metabolism; urea degradation; CO(2) and NH(3) from urea (urease route): step 1/1. The protein is Urease subunit beta of Mycobacterium sp. (strain JLS).